We begin with the raw amino-acid sequence, 239 residues long: 7-cyano-7-deazaguanine synthase (239 aa).

An ATP-binding site is contributed by 7 to 17 (LSGGIDSSTLL). The Zn(2+) site is built by cysteine 184, cysteine 192, cysteine 195, and cysteine 198.

It belongs to the QueC family. Zn(2+) is required as a cofactor.

It carries out the reaction 7-carboxy-7-deazaguanine + NH4(+) + ATP = 7-cyano-7-deazaguanine + ADP + phosphate + H2O + H(+). It functions in the pathway purine metabolism; 7-cyano-7-deazaguanine biosynthesis. Functionally, catalyzes the ATP-dependent conversion of 7-carboxy-7-deazaguanine (CDG) to 7-cyano-7-deazaguanine (preQ(0)). In Archaeoglobus fulgidus (strain ATCC 49558 / DSM 4304 / JCM 9628 / NBRC 100126 / VC-16), this protein is 7-cyano-7-deazaguanine synthase.